Reading from the N-terminus, the 313-residue chain is Calcyphosin-2 (313 aa).

EF-hand domains are found at residues 144-179 (RILTGLGKYFQQLDKEGNGLLDKADFKQALKVFHLE), 180-215 (VSEKDFESAWLILDDNGNGKVDYGEFKRGIIGEMNE), and 216-251 (YRKSYVRKAFMKLDFNKTGSVPITNIRKCYCAKKHS). Ca(2+) contacts are provided by aspartate 193, asparagine 195, asparagine 197, lysine 199, and glutamate 204.

This Macaca fascicularis (Crab-eating macaque) protein is Calcyphosin-2 (CAPS2).